We begin with the raw amino-acid sequence, 172 residues long: Small ribosomal subunit protein uS5 (172 aa).

One can recognise an S5 DRBM domain in the interval 17–80; it reads LREKMISVNR…DEARRKMVKV (64 aa).

Belongs to the universal ribosomal protein uS5 family. As to quaternary structure, part of the 30S ribosomal subunit. Contacts proteins S4 and S8.

Functionally, with S4 and S12 plays an important role in translational accuracy. In terms of biological role, located at the back of the 30S subunit body where it stabilizes the conformation of the head with respect to the body. This chain is Small ribosomal subunit protein uS5, found in Cupriavidus pinatubonensis (strain JMP 134 / LMG 1197) (Cupriavidus necator (strain JMP 134)).